A 157-amino-acid chain; its full sequence is Secreted effector protein See1 (157 aa).

Positions 1–21 (MLFTTFVSLLLVILCLVHVSA) are cleaved as a signal peptide. The tract at residues 124–157 (SYRYGDSHGNSREAEYSVADHQSASGEYKFGPTT) is disordered. Residues 128–138 (GDSHGNSREAE) show a composition bias toward basic and acidic residues.

In terms of assembly, interacts with a maize homolog of SGT1, a factor acting in cell cycle progression in yeast Saccharomyces cerevisiae and an important component of plant and human innate immunity.

The protein resides in the secreted. It is found in the host cytoplasm. The protein localises to the host nucleus. In terms of biological role, effector protein involved in the induction of tumors in infected plant tissues by the fungus. Required for the reactivation of plant DNA synthesis, which is crucial for tumor progression in leaf cells. Interferes with the MAPK-triggered phosphorylation of maize SGT1 at a monocot-specific phosphorylation site, resulting in both modulation of immune responses and reactivation of DNA synthesis during leaf tumor formation. The polypeptide is Secreted effector protein See1 (Mycosarcoma maydis (Corn smut fungus)).